The primary structure comprises 122 residues: Large ribosomal subunit protein bL12 (122 aa).

Belongs to the bacterial ribosomal protein bL12 family. In terms of assembly, homodimer. Part of the ribosomal stalk of the 50S ribosomal subunit. Forms a multimeric L10(L12)X complex, where L10 forms an elongated spine to which 2 to 4 L12 dimers bind in a sequential fashion. Binds GTP-bound translation factors.

Functionally, forms part of the ribosomal stalk which helps the ribosome interact with GTP-bound translation factors. Is thus essential for accurate translation. This Sodalis glossinidius (strain morsitans) protein is Large ribosomal subunit protein bL12.